The primary structure comprises 76 residues: ATP synthase subunit 9, mitochondrial (76 aa).

2 helical membrane-spanning segments follow: residues 14 to 34 (ISTI…AALI) and 48 to 68 (FPFA…CLMV).

It belongs to the ATPase C chain family. As to quaternary structure, F-type ATPases have 2 components, CF(1) - the catalytic core - and CF(0) - the membrane proton channel. CF(1) has five subunits: alpha(3), beta(3), gamma(1), delta(1), epsilon(1). CF(0) has three main subunits: a, b and c.

Its subcellular location is the mitochondrion membrane. Its function is as follows. Mitochondrial membrane ATP synthase (F(1)F(0) ATP synthase or Complex V) produces ATP from ADP in the presence of a proton gradient across the membrane which is generated by electron transport complexes of the respiratory chain. F-type ATPases consist of two structural domains, F(1) - containing the extramembraneous catalytic core and F(0) - containing the membrane proton channel, linked together by a central stalk and a peripheral stalk. During catalysis, ATP synthesis in the catalytic domain of F(1) is coupled via a rotary mechanism of the central stalk subunits to proton translocation. Part of the complex F(0) domain. A homomeric c-ring of probably 10 subunits is part of the complex rotary element. This chain is ATP synthase subunit 9, mitochondrial (ATP9), found in Cyberlindnera mrakii (Yeast).